Reading from the N-terminus, the 651-residue chain is Protein EXECUTER 2, chloroplastic (651 aa).

The transit peptide at Met-1–Asn-69 directs the protein to the chloroplast. Residues Glu-103–Asp-138 enclose the UVR domain. The tract at residues Asp-330–Ser-359 is disordered.

The protein localises to the plastid. The protein resides in the chloroplast. Functionally, together with EX1, enables higher plants to perceive singlet oxygen as a stress signal in plastid that activates a genetically determined nuclear stress response program which triggers a programmed cell death (PCD). This transfer of singlet oxygen-induced stress-related signals from the plastid to the nucleus that triggers genetically controlled PCD pathway is unique to photosynthetic eukaryotes and operates under mild stress conditions, impeding photosystem II (PSII) without causing photooxidative damage of the plant. This is Protein EXECUTER 2, chloroplastic from Arabidopsis thaliana (Mouse-ear cress).